The following is a 165-amino-acid chain: Transcriptional repressor NrdR (165 aa).

Residues 3-34 (CPFCSANDTKVIDSRLVSDGHQVRRRRECLAC) fold into a zinc finger. The region spanning 49–139 (PRIIKRDGSR…VYLSFEDISE (91 aa)) is the ATP-cone domain.

Belongs to the NrdR family. Zn(2+) is required as a cofactor.

Negatively regulates transcription of bacterial ribonucleotide reductase nrd genes and operons by binding to NrdR-boxes. The chain is Transcriptional repressor NrdR from Colwellia psychrerythraea (strain 34H / ATCC BAA-681) (Vibrio psychroerythus).